The following is a 513-amino-acid chain: GMP synthase [glutamine-hydrolyzing] (513 aa).

The region spanning 5 to 196 (QILILDFGSQ…LYDIAKCNKD (192 aa)) is the Glutamine amidotransferase type-1 domain. Catalysis depends on C83, which acts as the Nucleophile. Active-site residues include H170 and E172. Residues 197-388 (WNLDDFIDQQ…LGLPEEMINR (192 aa)) form the GMPS ATP-PPase domain. 224–230 (SGGVDSS) is an ATP binding site.

Homodimer.

It carries out the reaction XMP + L-glutamine + ATP + H2O = GMP + L-glutamate + AMP + diphosphate + 2 H(+). It functions in the pathway purine metabolism; GMP biosynthesis; GMP from XMP (L-Gln route): step 1/1. Functionally, catalyzes the synthesis of GMP from XMP. The polypeptide is GMP synthase [glutamine-hydrolyzing] (Mesoplasma florum (strain ATCC 33453 / NBRC 100688 / NCTC 11704 / L1) (Acholeplasma florum)).